A 108-amino-acid chain; its full sequence is UPF0060 membrane protein YnfA (108 aa).

Over 1 to 5 (MLKTT) the chain is Periplasmic. The chain crosses the membrane as a helical span at residues 6-26 (LLFFVTALCEIIGCFLTWLWI). Residues 27–30 (KRGA) lie on the Cytoplasmic side of the membrane. Residues 31–51 (SVWWLLPAAASLALFVWLLTL) form a helical membrane-spanning segment. Topologically, residues 52 to 60 (HPAASGRVY) are periplasmic. Residues 61 to 81 (AAYGGVYVCTALLWLRVVDGV) traverse the membrane as a helical segment. Residues 82 to 84 (RLT) lie on the Cytoplasmic side of the membrane. A helical transmembrane segment spans residues 85–105 (VYDWCGAPIALCGMLIIVVGW). The Periplasmic portion of the chain corresponds to 106–108 (GRT).

This sequence belongs to the UPF0060 family.

It localises to the cell inner membrane. This chain is UPF0060 membrane protein YnfA, found in Salmonella dublin (strain CT_02021853).